Consider the following 260-residue polypeptide: Indole-3-glycerol phosphate synthase (260 aa).

This sequence belongs to the TrpC family.

It carries out the reaction 1-(2-carboxyphenylamino)-1-deoxy-D-ribulose 5-phosphate + H(+) = (1S,2R)-1-C-(indol-3-yl)glycerol 3-phosphate + CO2 + H2O. The protein operates within amino-acid biosynthesis; L-tryptophan biosynthesis; L-tryptophan from chorismate: step 4/5. This is Indole-3-glycerol phosphate synthase from Thermoanaerobacter sp. (strain X514).